The sequence spans 146 residues: Leptin (146 aa).

Cysteines 96 and 146 form a disulfide.

The protein belongs to the leptin family.

It localises to the secreted. Its function is as follows. Key player in the regulation of energy balance and body weight control. Once released into the circulation, has central and peripheral effects by binding LEPR, found in many tissues, which results in the activation of several major signaling pathways. In the hypothalamus, acts as an appetite-regulating factor that induces a decrease in food intake and an increase in energy consumption by inducing anorexinogenic factors and suppressing orexigenic neuropeptides, also regulates bone mass and secretion of hypothalamo-pituitary-adrenal hormones. In the periphery, increases basal metabolism, influences reproductive function, regulates pancreatic beta-cell function and insulin secretion, is pro-angiogenic for endothelial cell and affects innate and adaptive immunity. In the arcuate nucleus of the hypothalamus, activates by depolarization POMC neurons inducing FOS and SOCS3 expression to release anorexigenic peptides and inhibits by hyperpolarization NPY neurons inducing SOCS3 with a consequent reduction on release of orexigenic peptides. In addition to its known satiety inducing effect, has a modulatory role in nutrient absorption. In the intestine, reduces glucose absorption by enterocytes by activating PKC and leading to a sequential activation of p38, PI3K and ERK signaling pathways which exerts an inhibitory effect on glucose absorption. Acts as a growth factor on certain tissues, through the activation of different signaling pathways increases expression of genes involved in cell cycle regulation such as CCND1, via JAK2-STAT3 pathway, or VEGFA, via MAPK1/3 and PI3K-AKT1 pathways. May also play an apoptotic role via JAK2-STAT3 pathway and up-regulation of BIRC5 expression. Pro-angiogenic, has mitogenic activity on vascular endothelial cells and plays a role in matrix remodeling by regulating the expression of matrix metalloproteinases (MMPs) and tissue inhibitors of metalloproteinases (TIMPs). In innate immunity, modulates the activity and function of neutrophils by increasing chemotaxis and the secretion of oxygen radicals. Increases phagocytosis by macrophages and enhances secretion of pro-inflammatory mediators. Increases cytotoxic ability of NK cells. Plays a pro-inflammatory role, in synergy with IL1B, by inducing NOS2 which promotes the production of IL6, IL8 and Prostaglandin E2, through a signaling pathway that involves JAK2, PI3K, MAP2K1/MEK1 and MAPK14/p38. In adaptive immunity, promotes the switch of memory T-cells towards T helper-1 cell immune responses. Increases CD4(+)CD25(-) T-cell proliferation and reduces autophagy during TCR (T-cell receptor) stimulation, through MTOR signaling pathway activation and BCL2 up-regulation. This chain is Leptin (LEP), found in Pongo pygmaeus (Bornean orangutan).